A 105-amino-acid chain; its full sequence is Vacuolar ATPase assembly integral membrane protein VMA21 homolog (105 aa).

The interval 1–26 is disordered; that stretch reads MSTKNKKAAGGNGVAPKQTRQQSHDS. The Cytoplasmic portion of the chain corresponds to 1 to 36; it reads MSTKNKKAAGGNGVAPKQTRQQSHDSQDYSSFKTVL. Residues 37–57 traverse the membrane as a helical segment; it reads FYCMLIVFLPVLTFFVLKGFV. At 58-68 the chain is on the lumenal side; that stretch reads LDQFLDISEVK. A helical transmembrane segment spans residues 69–89; it reads VNIASAVGAVVALHIALGLYI. Residues 90-105 are Cytoplasmic-facing; sequence YRAYFGAPGSKGSKTD.

Belongs to the VMA21 family.

Its subcellular location is the endoplasmic reticulum membrane. The protein localises to the endoplasmic reticulum-Golgi intermediate compartment membrane. It is found in the cytoplasmic vesicle. The protein resides in the COPII-coated vesicle membrane. Required for the assembly of the V0 complex of the vacuolar ATPase (V-ATPase) in the endoplasmic reticulum. This Drosophila melanogaster (Fruit fly) protein is Vacuolar ATPase assembly integral membrane protein VMA21 homolog.